Here is a 228-residue protein sequence, read N- to C-terminus: 2-phospho-L-lactate guanylyltransferase (228 aa).

It belongs to the CofC family. Homodimer.

The catalysed reaction is (2S)-2-phospholactate + GTP + H(+) = (2S)-lactyl-2-diphospho-5'-guanosine + diphosphate. The protein operates within cofactor biosynthesis; coenzyme F420 biosynthesis. In terms of biological role, guanylyltransferase that catalyzes the activation of (2S)-2-phospholactate (2-PL) as (2S)-lactyl-2-diphospho-5'-guanosine, via the condensation of 2-PL with GTP. It is involved in the biosynthesis of coenzyme F420, a hydride carrier cofactor. In Methanosphaera stadtmanae (strain ATCC 43021 / DSM 3091 / JCM 11832 / MCB-3), this protein is 2-phospho-L-lactate guanylyltransferase.